The following is a 75-amino-acid chain: uncharacterized protein (75 aa).

Residues 1–19 (MQCVCLCVFVLLLAGCVTS) form the signal peptide.

As to expression, nacreous layer of shell (at protein level).

The protein localises to the secreted. This is an uncharacterized protein from Margaritifera margaritifera (Freshwater pearl mussel).